A 268-amino-acid chain; its full sequence is uncharacterized protein (268 aa).

The chain crosses the membrane as a helical span at residues 150–172 (LYSIADFLAYTFTYFYLATVGLA).

It localises to the host membrane. This is an uncharacterized protein from Sulfolobus islandicus rod-shaped virus 1 (SIRV-1).